We begin with the raw amino-acid sequence, 385 residues long: Single-stranded DNA-binding protein 4 (385 aa).

At Met1 the chain carries N-acetylmethionine. Residues 17-49 enclose the LisH domain; it reads AREKLALYVYEYLLHIGAQKSAQTFLSEIRWEK. Disordered regions lie at residues 122 to 287 and 331 to 363; these read FQGP…NSSE and GSGD…GEMA. The segment covering 245-263 has biased composition (low complexity); that stretch reads SPSGNSIPYSSSSPGSYTG. Over residues 267–277 the composition is skewed to pro residues; it reads GGGPPGTPIMP. Ser341 carries the post-translational modification Phosphoserine. Thr355 carries the phosphothreonine modification.

Its subcellular location is the nucleus. This chain is Single-stranded DNA-binding protein 4 (SSBP4), found in Homo sapiens (Human).